Here is a 2241-residue protein sequence, read N- to C-terminus: MKVTQASCHQGDIARFGARAGNQCVCNGIMFLHALHLGGTSAVLQTEALDAIMEEGARLDARLERELQKKLPAGGRLPVYRLGDEVPRRLESRFGRTVHALSRPFNGTTETCDLDGYMCPGIFDFLRYAHAKPRPTYVLVTVNSLARAVVFTEDHMLVFDPHSSAECHNAAVYHCEGLHQVLMVLTGFGVQLSPAFYYEALFLYMLDVATVPEAEIAARLVSTYRDRDIDLTGVVRESADTAATTTTAAPSLPPLPDPIVDPGCPPGVAPSIPVYDPSSSPKKTPEKRRKDLSGSKHGGKKKPPSTTSKTLATASSSPSAIAAASSSSAVPPSYSCGEGALPALGRYQQLVDEVEQELKALTLPPLPANTSAWTLHAAGTESGANAATATAPSFDEAFLTDRLQQLIIHAVNQRSCLRRPCGPQSAAQQAVRAYLGLSKKLDAFLLNWLHHGLDLQRMHDYLSHKTTKGTYSTLDRALLEKMQVVFDPYGRQHGPALIAWVEEMLRYVESKPTNELSQRLQRFVTKRPMPVSDSFVCLRPVDFQRLTQVIEQRRRVLQRQREEYHGVYEHLAGLITSIDIHDLDASDLNRREILKALQPLDDNAKQELFRLGNAKMLELQMDLDRLSTQLLTRVHNHILNGFLPVEDLKQMERVVEQVLRLFYDLRDLKLCDGSYEEGFVVIREQLSYLMTGTVRDNVPLLQEILQLRHAYQQATQQNEGRLTQIHDLLHVIETLVRDPGSRGSALTLALVQEQLAQLEALGGLQLPEVQQRLQNAQLALSRLYEEEEETQRFLDGLSYDDPPNEQTIKRHPQLREMLRRDEQTRLRLINAVLSMFHTLVMRLARDESPRPTFFDAVSLLLQQLPPDSHEREDLRAANATYAQMVKKLEQIEKAGTGASEKRFQALRELVYFFRNHEYFFQHMVGRLGVGPQVTELYERYQHEMEEQHLERLEREWQEEAGKLTVTSVEDVQRVLARAPSHRVMHQMQQTLTTKMQDFLDKEKRKQEEQQRQLLDGYQKKVQQDLQRVVDAVKGEMLSTIPHQPLEATLELLLGLDQRAQPLLDKFNQDLLSALQQLSKKLDGRINECLHGVLTGDVERRCHPHREAAMQTQASLNHLDQILGPQLLIHETQQALQHAVHQAQFIEKCQQGDPTTAITGSEFEGDFARYRSSQQKMEEQLQETRQQMTETSERLDRSLRQDPGSSSVTRVPEKPFKGQELAGRITPPPADFQQPVFKTLLDQQADAARKALSDEADLLNQKVQTQLRQRDEQLSTAQNLWTDLVTRHKMSGGLDVTTPDAKALMEKPLETLRELLGKATQQLPYLSAERTVRWMLAFLEEALAQITADPTHPHHGSRTHYRNLQQQAVESAVTLAHQIEQNAACENFIAQHQEATANGASTPRVDMVQAVEAVWQRLEPGRVAGGAARHQKVQELLQRLGQTLGDLELQETLATEYFALLHGIQTFSYGLDFRSQLEKIRDLRTRFAELAKRRGTRLSNEGVLPNPRKPQATTSLGAFTRGLNALERHVQLGHQYLLNKLNGSSLVYRLEDIPSVLPATHETDPALIMRDRLRRLCFARHHDTFLEVVDVFGMRQIVTQAGEPIHLVTDYGNVAFKYLALRDDGRPLAWRRRCSGGGLKNVVTTRYKAITVAVAVCQTLRTFWPQISQYDLRPYLTQHQSHTHPAETHTLHNLKLFCYLVSTAWHQRIDTQQELTAADRVGSGEGGDVGEQRPGRGTVLRLSLQEFCVLIAALYPEYIYTVLKYPVQMSLPSLTAHLHQDVIHAVVNNTHKMPPDHLPEQVKAFCITPTQWPAMQLNKLFWENKLVQQLCQVGPQKSTPPLGKLWLYAMATLVFPQDMLQCLWLELKPQYAETYASVSELVQTLFQIFTQQCEMVTEGYTQPQLPTGEPVLQMIRVPRQDTTTTDTNTTTEPGLLDVFIQTETALDYALGSWLFGIPVCLGVHVADLLKGQRILVARHLEYTSRDRDFLRIQRSRDLNLSQLLQDTWTETPLEHCWLQAQIRRLRDYLRFPTRLEFIPLVIYNAQDHTVVRVLRPPSTFEQDHSRLVLDEAFPTFPLYDQDDNSSADNIAASGAAPTPPVPFNRVPVNIQFLRENPPPIARVQQPPRRHRHRAAAAADDDGQIDHVQDDTSRTADSALVSTAFGGSVFQENRLGETPLCRDELVAVAPGAASTSFASPPITVLTQNVLSALEILRLVRLDLRQLAQSVQDTIQHMRFLYLL.

The deubiquitination activity stretch occupies residues 1–238; sequence MKVTQASCHQ…IDLTGVVRES (238 aa). Residues 4 to 226 form the Peptidase C76 domain; it reads TQASCHQGDI…AARLVSTYRD (223 aa). Active-site residues include Cys-24, Asp-160, and His-162. The interval 239-314 is disordered; that stretch reads ADTAATTTTA…STTSKTLATA (76 aa). The span at 240–250 shows a compositional bias: low complexity; it reads DTAATTTTAAP. A compositionally biased stretch (pro residues) spans 251–268; it reads SLPPLPDPIVDPGCPPGV. A compositionally biased stretch (low complexity) spans 304-314; sequence PSTTSKTLATA. An interaction with inner tegument protein region spans residues 327 to 331; that stretch reads SSAVP. Residues 1170–1229 are disordered; sequence RSSQQKMEEQLQETRQQMTETSERLDRSLRQDPGSSSVTRVPEKPFKGQELAGRITPPPA. The span at 1190 to 1199 shows a compositional bias: basic and acidic residues; that stretch reads TSERLDRSLR.

This sequence belongs to the herpesviridae large tegument protein family. Interacts with host CUL1 and CUL4A; these interactions inhibit the E3 ligase activity of cullins. Interacts with inner tegument protein. Interacts with capsid vertex specific component CVC2. Interacts with the major capsid protein/MCP.

It is found in the virion tegument. The protein localises to the host cytoplasm. The protein resides in the host nucleus. The catalysed reaction is Thiol-dependent hydrolysis of ester, thioester, amide, peptide and isopeptide bonds formed by the C-terminal Gly of ubiquitin (a 76-residue protein attached to proteins as an intracellular targeting signal).. Functionally, large tegument protein that plays multiple roles in the viral cycle. During viral entry, remains associated with the capsid while most of the tegument is detached and participates in the capsid transport toward the host nucleus. Plays a role in the routing of the capsid at the nuclear pore complex and subsequent uncoating. Within the host nucleus, acts as a deneddylase and promotes the degradation of nuclear CRLs (cullin-RING ubiquitin ligases) and thereby stabilizes nuclear CRL substrates, while cytoplasmic CRLs remain unaffected. These modifications prevent host cell cycle S-phase progression and create a favorable environment allowing efficient viral genome replication. Participates later in the secondary envelopment of capsids. Indeed, plays a linker role for the association of the outer viral tegument to the capsids together with the inner tegument protein. The polypeptide is Large tegument protein deneddylase (UL48) (Human cytomegalovirus (strain AD169) (HHV-5)).